The following is a 1275-amino-acid chain: ATP-dependent helicase/nuclease subunit A (1275 aa).

In terms of domain architecture, UvrD-like helicase ATP-binding spans 4 to 481 (PKWTKEQLEV…IMLYKNFRSR (478 aa)). 25-32 (AAAGSGKT) provides a ligand contact to ATP. A UvrD-like helicase C-terminal domain is found at 531–839 (TEIHLIQKDN…RIMSIHKSKG (309 aa)).

The protein belongs to the helicase family. AddA subfamily. As to quaternary structure, heterodimer of AddA and AddB/RexB. The cofactor is Mg(2+).

It carries out the reaction Couples ATP hydrolysis with the unwinding of duplex DNA by translocating in the 3'-5' direction.. The catalysed reaction is ATP + H2O = ADP + phosphate + H(+). The heterodimer acts as both an ATP-dependent DNA helicase and an ATP-dependent, dual-direction single-stranded exonuclease. Recognizes the chi site generating a DNA molecule suitable for the initiation of homologous recombination. The AddA nuclease domain is required for chi fragment generation; this subunit has the helicase and 3' -&gt; 5' nuclease activities. The protein is ATP-dependent helicase/nuclease subunit A of Clostridioides difficile (strain 630) (Peptoclostridium difficile).